The chain runs to 74 residues: Large ribosomal subunit protein bL27c (74 aa).

This sequence belongs to the bacterial ribosomal protein bL27 family.

The protein localises to the plastid. The protein resides in the chloroplast. In Calyptrosphaera sphaeroidea, this protein is Large ribosomal subunit protein bL27c (rpl27).